The sequence spans 376 residues: Alanine racemase (376 aa).

Residue lysine 36 is the Proton acceptor; specific for D-alanine of the active site. The residue at position 36 (lysine 36) is an N6-(pyridoxal phosphate)lysine. Arginine 134 serves as a coordination point for substrate. Tyrosine 266 acts as the Proton acceptor; specific for L-alanine in catalysis. Residue methionine 314 coordinates substrate.

It belongs to the alanine racemase family. Pyridoxal 5'-phosphate is required as a cofactor.

The catalysed reaction is L-alanine = D-alanine. It participates in amino-acid biosynthesis; D-alanine biosynthesis; D-alanine from L-alanine: step 1/1. Functionally, catalyzes the interconversion of L-alanine and D-alanine. May also act on other amino acids. The polypeptide is Alanine racemase (alr) (Nitratidesulfovibrio vulgaris (strain DP4) (Desulfovibrio vulgaris)).